The chain runs to 296 residues: Nucleotide-binding protein Spy49_0545 (296 aa).

13-20 (GMSGAGKT) lines the ATP pocket. GTP is bound at residue 63–66 (DMRS).

This sequence belongs to the RapZ-like family.

Its function is as follows. Displays ATPase and GTPase activities. In Streptococcus pyogenes serotype M49 (strain NZ131), this protein is Nucleotide-binding protein Spy49_0545.